The chain runs to 521 residues: Bifunctional purine biosynthesis protein PurH (521 aa).

The MGS-like domain maps to 1–147 (MAKITRALIS…KNNADVTVLV (147 aa)).

The protein belongs to the PurH family.

The enzyme catalyses (6R)-10-formyltetrahydrofolate + 5-amino-1-(5-phospho-beta-D-ribosyl)imidazole-4-carboxamide = 5-formamido-1-(5-phospho-D-ribosyl)imidazole-4-carboxamide + (6S)-5,6,7,8-tetrahydrofolate. It catalyses the reaction IMP + H2O = 5-formamido-1-(5-phospho-D-ribosyl)imidazole-4-carboxamide. The protein operates within purine metabolism; IMP biosynthesis via de novo pathway; 5-formamido-1-(5-phospho-D-ribosyl)imidazole-4-carboxamide from 5-amino-1-(5-phospho-D-ribosyl)imidazole-4-carboxamide (10-formyl THF route): step 1/1. It functions in the pathway purine metabolism; IMP biosynthesis via de novo pathway; IMP from 5-formamido-1-(5-phospho-D-ribosyl)imidazole-4-carboxamide: step 1/1. This Geobacter sulfurreducens (strain ATCC 51573 / DSM 12127 / PCA) protein is Bifunctional purine biosynthesis protein PurH.